We begin with the raw amino-acid sequence, 565 residues long: Nephronectin (565 aa).

Positions 1-19 (MDFLLALVLVSSLYLQAAA) are cleaved as a signal peptide. In terms of domain architecture, EGF-like 1 spans 52 to 87 (SWGQCQPVCQPRCKHGECIGPNKCKCHPGYAGKTCN). Cystine bridges form between cysteine 56-cysteine 69, cysteine 60-cysteine 75, cysteine 77-cysteine 86, cysteine 93-cysteine 104, cysteine 100-cysteine 113, and cysteine 115-cysteine 127. An EGF-like 2; calcium-binding domain is found at 89 to 128 (DLNECGLKPRPCKHRCMNTYGSYKCYCLNGYMLMPDGSCS). One can recognise an EGF-like 3 domain in the interval 132 to 168 (TCSMANCQYGCDVVKGQIRCQCPSPGLQLAPDGRTCV). Residues 169-213 (DVDECATGRASCPRFRQCVNTFGSYICKCHKGFNLMYIGGKYQCH) enclose the EGF-like 4; calcium-binding domain. Intrachain disulfides connect cysteine 173–cysteine 186, cysteine 180–cysteine 195, cysteine 197–cysteine 212, cysteine 218–cysteine 231, cysteine 225–cysteine 240, and cysteine 242–cysteine 253. One can recognise an EGF-like 5; calcium-binding domain in the interval 214–254 (DIDECSLGQYQCSSFARCYNIHGSYKCKCKEGYQGDGLTCV). The disordered stretch occupies residues 301-373 (YIPPIITNRP…PPGGITVDNR (73 aa)). The segment covering 304-316 (PIITNRPTSKPTT) has biased composition (low complexity). The segment covering 317–349 (RPTPKPTPIPTPPPPPPLPTELRTPLPPTTPER) has biased composition (pro residues). The short motif at 382-384 (RGD) is the Integrin interaction element. The region spanning 420–563 (HSCNFDHGLC…VSLKKGHCSE (144 aa)) is the MAM domain.

It belongs to the nephronectin family. In terms of assembly, homodimer and homotrimer.

The protein resides in the secreted. It is found in the extracellular space. Its subcellular location is the extracellular matrix. Functionally, functional ligand of integrin alpha-8/beta-1 in kidney development. Regulates the expression of GDNF with integrin alpha-8/beta-1 which is essential for kidney development. May also play a role in the development and function of various tissues, regulating cell adhesion, spreading and survival through the binding of several integrins. The chain is Nephronectin (NPNT) from Pongo abelii (Sumatran orangutan).